Here is an 84-residue protein sequence, read N- to C-terminus: MAHKKGAGSTKNGRDSNAKRLGVKRFGGETVKAGSILIRQRGMKFKPGVNVGYGKDFTLFALIDGTVKFDYKDAQHKRVNIITQ.

The interval 1-23 (MAHKKGAGSTKNGRDSNAKRLGV) is disordered.

It belongs to the bacterial ribosomal protein bL27 family.

It is found in the plastid. Its subcellular location is the chloroplast. The sequence is that of Large ribosomal subunit protein bL27c from Thalassiosira pseudonana (Marine diatom).